The sequence spans 406 residues: Bifunctional enzyme Fae/Hps (406 aa).

The formaldehyde-activating enzyme stretch occupies residues 1 to 164 (MSDIYEIGEA…AEKDRGTHPI (164 aa)). Catalysis depends on His20, which acts as the Proton donor. 5 residues coordinate substrate: Asp22, Leu51, Lys69, Thr71, and Gln86. The interval 165 to 406 (MGFKAMKLWN…RLALDEDEKI (242 aa)) is 3-hexulose-6-phosphate synthase.

The protein in the N-terminal section; belongs to the formaldehyde-activating enzyme family. It in the C-terminal section; belongs to the HPS/KGPDC family. HPS subfamily.

It catalyses the reaction 5,6,7,8-tetrahydromethanopterin + formaldehyde = 5,10-methylenetetrahydromethanopterin + H2O. It carries out the reaction D-ribulose 5-phosphate + formaldehyde = D-arabino-hex-3-ulose 6-phosphate. It functions in the pathway carbohydrate biosynthesis; D-ribose 5-phosphate biosynthesis. Its function is as follows. Catalyzes the condensation of formaldehyde with tetrahydromethanopterin (H(4)MPT) to 5,10-methylenetetrahydromethanopterin. In terms of biological role, catalyzes the reversible formation of ribulose-5-phosphate and formaldehyde from 3-hexulose-6-phosphate. This chain is Bifunctional enzyme Fae/Hps, found in Methanosphaera stadtmanae (strain ATCC 43021 / DSM 3091 / JCM 11832 / MCB-3).